Consider the following 221-residue polypeptide: MLDVVKGNLIVSCQALSDEPLHSSFIMGRMAIAAKQGGAAAIRAQGVNDINEIKEVTKLPIIGIIKRNYDDSEIYITPTMKEVDELLKTDCEMIALDATKRKRPNGENVKDLVDAIHAKGRLAMADISTLEEGIEAEKLGFDCVSTTLSGYTPYSKQSNSVDFELLEELVKTVKIPVICEGRINTPEELKKALDLGAYSAVVGGAITRPQQITKRFTDILK.

It belongs to the NanE family.

The enzyme catalyses an N-acyl-D-glucosamine 6-phosphate = an N-acyl-D-mannosamine 6-phosphate. Its pathway is amino-sugar metabolism; N-acetylneuraminate degradation; D-fructose 6-phosphate from N-acetylneuraminate: step 3/5. Its function is as follows. Converts N-acetylmannosamine-6-phosphate (ManNAc-6-P) to N-acetylglucosamine-6-phosphate (GlcNAc-6-P). This chain is Putative N-acetylmannosamine-6-phosphate 2-epimerase, found in Clostridium perfringens (strain ATCC 13124 / DSM 756 / JCM 1290 / NCIMB 6125 / NCTC 8237 / Type A).